Consider the following 188-residue polypeptide: Elongation factor P (188 aa).

This sequence belongs to the elongation factor P family.

It localises to the cytoplasm. Its pathway is protein biosynthesis; polypeptide chain elongation. Functionally, involved in peptide bond synthesis. Stimulates efficient translation and peptide-bond synthesis on native or reconstituted 70S ribosomes in vitro. Probably functions indirectly by altering the affinity of the ribosome for aminoacyl-tRNA, thus increasing their reactivity as acceptors for peptidyl transferase. This chain is Elongation factor P, found in Christiangramia forsetii (strain DSM 17595 / CGMCC 1.15422 / KT0803) (Gramella forsetii).